The following is a 221-amino-acid chain: Adenylate kinase (221 aa).

Residue 10–15 (GAGKGT) participates in ATP binding. The tract at residues 30 to 59 (STGDMLRAAVKAGTPLGVEAKKVMDAGGLV) is NMP. Residues Thr31, Arg36, 57-59 (GLV), 85-88 (GFPR), and Gln92 contribute to the AMP site. The interval 122 to 159 (GRRVHVASGRTYHVKYNPPKTEGVDDETGEALIQRDDD) is LID. Residues Arg123 and 132–133 (TY) each bind ATP. Residues Arg156 and Arg167 each coordinate AMP. Residue Gly207 participates in ATP binding.

It belongs to the adenylate kinase family. In terms of assembly, monomer.

It is found in the cytoplasm. It catalyses the reaction AMP + ATP = 2 ADP. The protein operates within purine metabolism; AMP biosynthesis via salvage pathway; AMP from ADP: step 1/1. Its function is as follows. Catalyzes the reversible transfer of the terminal phosphate group between ATP and AMP. Plays an important role in cellular energy homeostasis and in adenine nucleotide metabolism. This is Adenylate kinase from Cupriavidus necator (strain ATCC 17699 / DSM 428 / KCTC 22496 / NCIMB 10442 / H16 / Stanier 337) (Ralstonia eutropha).